Here is a 273-residue protein sequence, read N- to C-terminus: tRNA (guanine-N(7)-)-methyltransferase (273 aa).

Residues G86, E109, R111, N142, A143, and L162 each coordinate S-adenosyl-L-methionine. Residue D165 is part of the active site. The interval 166–174 (PHFKKTKHK) is alphaC helix. S-adenosyl-L-methionine is bound by residues T240 and E242. The tract at residues 240 to 248 (TEEGKKVQR) is alpha6 helix.

This sequence belongs to the class I-like SAM-binding methyltransferase superfamily. TrmB family. As to quaternary structure, catalytic component of the METTL1-WDR4 complex, composed of mettl1 and wdr4.

The protein localises to the nucleus. It catalyses the reaction guanosine(46) in tRNA + S-adenosyl-L-methionine = N(7)-methylguanosine(46) in tRNA + S-adenosyl-L-homocysteine. It carries out the reaction a guanosine in mRNA + S-adenosyl-L-methionine = an N(7)-methylguanosine in mRNA + S-adenosyl-L-homocysteine. The enzyme catalyses a guanosine in miRNA + S-adenosyl-L-methionine = an N(7)-methylguanosine in miRNA + S-adenosyl-L-homocysteine. It participates in tRNA modification; N(7)-methylguanine-tRNA biosynthesis. In terms of biological role, catalytic component of METTL1-WDR4 methyltransferase complex that mediates the formation of N(7)-methylguanine in a subset of RNA species, such as tRNAs, mRNAs and microRNAs (miRNAs). Catalyzes the formation of N(7)-methylguanine at position 46 (m7G46) in a large subset of tRNAs that contain the 5'-RAGGU-3' motif within the variable loop. M7G46 interacts with C13-G22 in the D-loop to stabilize tRNA tertiary structure and protect tRNAs from decay. Also acts as a methyltransferase for a subset of internal N(7)-methylguanine in mRNAs. Internal N(7)-methylguanine methylation of mRNAs in response to stress promotes their relocalization to stress granules, thereby suppressing their translation. Also methylates a specific subset of miRNAs. The polypeptide is tRNA (guanine-N(7)-)-methyltransferase (mettl1) (Xenopus laevis (African clawed frog)).